A 110-amino-acid polypeptide reads, in one-letter code: uncharacterized protein (110 aa).

The stretch at 16–46 (ELDKLRECEERLSVIEKQKQSSKQESEETYI) forms a coiled coil. The span at 85–96 (EEKDKKCQRKPE) shows a compositional bias: basic and acidic residues. A disordered region spans residues 85–110 (EEKDKKCQRKPEAPSTPAVTIRSKRQ).

This is an uncharacterized protein from Bacillus subtilis (strain 168).